Reading from the N-terminus, the 492-residue chain is DEAD-box ATP-dependent RNA helicase RhpA (492 aa).

The Q motif motif lies at 20 to 48 (PSFNDLGLKESVLKSVYEAGFTSPSPIQE). Residues 51-220 (IPAVLQGRDV…DKILENPIKI (170 aa)) enclose the Helicase ATP-binding domain. 64 to 71 (AQTGTGKT) contributes to the ATP binding site. A DEAD box motif is present at residues 168–171 (DESD). The Helicase C-terminal domain occupies 231-393 (DITQRFYVIN…EIPTINENQI (163 aa)). The segment at 445–492 (AIQNPKEKTPKPSNKKTPQHERARSFKKGQHRDRHPKTNHYSKKPKRR) is disordered. The span at 469–492 (SFKKGQHRDRHPKTNHYSKKPKRR) shows a compositional bias: basic residues.

It belongs to the DEAD box helicase family. Homodimer. Interacts with RNase J (rnj), might be a member of a minimal RNA degradosome complex.

The protein resides in the cytoplasm. It catalyses the reaction ATP + H2O = ADP + phosphate + H(+). Functionally, DEAD-box RNA helicase probably involved in RNA degradation. Unwinds dsRNA in both 5'- and 3'-directions. This chain is DEAD-box ATP-dependent RNA helicase RhpA (rhpA), found in Helicobacter pylori (strain ATCC 700392 / 26695) (Campylobacter pylori).